The chain runs to 538 residues: Potassium channel subfamily K member 10 (538 aa).

Residues 1–71 (MFFLYTDFFL…GLQTVMKWKT (71 aa)) lie on the Cytoplasmic side of the membrane. The chain crosses the membrane as a helical span at residues 72–92 (VVAIFVVVVVYLVTGGLVFRA). N-linked (GlcNAc...) asparagine glycosylation is found at Asn144, Asn147, and Asn148. An intramembrane region (pore-forming) is located at residues 154–180 (LGSAFFFAGTVITTIGYGNIAPSTEGG). 4 residues coordinate K(+): Thr167, Ile168, Gly169, and Tyr170. A selectivity filter 1 region spans residues 167 to 172 (TIGYGN). A helical membrane pass occupies residues 182-202 (IFCILYAIFGIPLFGFLLAGI). At 203-233 (GDQLGTIFGKSIARVEKVFRKKQVSQTKIRV) the chain is on the cytoplasmic side. Residues 234-254 (ISTILFILAGCIVFVTIPAVI) traverse the membrane as a helical segment. Residues 263–294 (ALESIYFVVVTLTTVGFGDFVAGGNAGINYRE) constitute an intramembrane region (pore-forming). The K(+) site is built by Thr276, Val277, Gly278, and Phe279. The selectivity filter 2 stretch occupies residues 276 to 281 (TVGFGD). Residues 299 to 319 (LVWFWILVGLAYFAAVLSMIG) form a helical membrane-spanning segment. Over 320 to 538 (DWLRVLSKKT…ENNSLLEDRN (219 aa)) the chain is Cytoplasmic. Over residues 412–421 (SQESINNRPN) the composition is skewed to polar residues. Disordered stretches follow at residues 412 to 443 (SQES…EDNI) and 510 to 538 (QHAE…EDRN). Basic and acidic residues predominate over residues 522 to 538 (DTKDREPENNSLLEDRN).

It belongs to the two pore domain potassium channel (TC 1.A.1.8) family. As to quaternary structure, homodimer; disulfide-linked. Forms heterodimers with other 2-pore domain K(+) channel subunits, such as KCNK2, KCNK4 and KCNK18. Abundantly expressed in pancreas and kidney and to a lower level in brain, testis, colon, and small intestine. In brain, mainly expressed in cerebellum, occipital lobe, putamen, and thalamus. No expression is detected in amygdala and spinal cord. In terms of tissue distribution, strongly expressed in kidney (primarily in the proximal tubule) and pancreas. As to expression, abundantly expressed in brain.

It is found in the cell membrane. The enzyme catalyses K(+)(in) = K(+)(out). It carries out the reaction Rb(+)(in) = Rb(+)(out). The catalysed reaction is Cs(+)(in) = Cs(+)(out). Its activity is regulated as follows. Activated by various stimuli including acidic pH, anesthetics chloroform, halothane and isoflurane, mechanical stretch, lipids such as arachidonic, docosahexaenoic and linoleic polyunsaturated fatty acids and lysophosphatidylcholine and lysophosphatidylinositol lysophospholipids. Inhibited by norfluoxetine, the active metabolite of antidepressant fluoxetine (Prozac). Its function is as follows. K(+) channel that conducts voltage-dependent outward rectifying currents upon membrane depolarization. Voltage sensing is coupled to K(+) electrochemical gradient in an 'ion flux gating' mode where outward but not inward ion flow opens the gate. Converts to voltage-independent 'leak' conductance mode upon stimulation by various stimuli including mechanical membrane stretch, acidic pH, heat and lipids. Homo- and heterodimerizes to form functional channels with distinct regulatory and gating properties. In trigeminal ganglia sensory neurons, the heterodimer of KCNK10/TREK-2 and KCNK18/TRESK inhibits neuronal firing and neurogenic inflammation by stabilizing the resting membrane potential at K(+) equilibrium potential as well as by regulating the threshold of action potentials and the spike frequency. Permeable to other monovalent ions such as Rb(+) and Cs(+). This Homo sapiens (Human) protein is Potassium channel subfamily K member 10.